The chain runs to 278 residues: Membrane protein insertase YidC 2 (278 aa).

The N-terminal stretch at 1–18 is a signal peptide; it reads MHKRLFITLLGFIILLAG. Cys-19 carries N-palmitoyl cysteine lipidation. A lipid anchor (S-diacylglycerol cysteine) is attached at Cys-19. A run of 4 helical transmembrane segments spans residues 55 to 75, 132 to 152, 176 to 196, and 224 to 244; these read GFAIISIVLIVRFILLPFMLI, MLGCLPVLIQMPILMGLYMSL, LIMTIIAAIMYFVQPLVNSIH, and AAALGLYWSISAAFLIVQMHF.

This sequence belongs to the OXA1/ALB3/YidC family. Type 2 subfamily.

Its subcellular location is the cell membrane. In terms of biological role, required for the insertion and/or proper folding and/or complex formation of integral membrane proteins into the membrane. Involved in integration of membrane proteins that insert both dependently and independently of the Sec translocase complex, as well as at least some lipoproteins. The polypeptide is Membrane protein insertase YidC 2 (Staphylococcus epidermidis (strain ATCC 12228 / FDA PCI 1200)).